A 293-amino-acid polypeptide reads, in one-letter code: 4-hydroxy-tetrahydrodipicolinate synthase (293 aa).

T47 is a pyruvate binding site. Y136 serves as the catalytic Proton donor/acceptor. Residue K164 is the Schiff-base intermediate with substrate of the active site. A pyruvate-binding site is contributed by I206.

The protein belongs to the DapA family. Homotetramer; dimer of dimers.

It localises to the cytoplasm. The enzyme catalyses L-aspartate 4-semialdehyde + pyruvate = (2S,4S)-4-hydroxy-2,3,4,5-tetrahydrodipicolinate + H2O + H(+). The protein operates within amino-acid biosynthesis; L-lysine biosynthesis via DAP pathway; (S)-tetrahydrodipicolinate from L-aspartate: step 3/4. Functionally, catalyzes the condensation of (S)-aspartate-beta-semialdehyde [(S)-ASA] and pyruvate to 4-hydroxy-tetrahydrodipicolinate (HTPA). This chain is 4-hydroxy-tetrahydrodipicolinate synthase, found in Listeria monocytogenes serotype 4b (strain CLIP80459).